A 542-amino-acid chain; its full sequence is CTP synthase (542 aa).

The tract at residues M1–V265 is amidoligase domain. CTP is bound at residue S13. A UTP-binding site is contributed by S13. S14 to I19 is an ATP binding site. Y54 contributes to the L-glutamine binding site. D71 lines the ATP pocket. Residues D71 and E140 each contribute to the Mg(2+) site. Residues D147 to E149, K186 to Q191, and K222 contribute to the CTP site. UTP is bound by residues K186–Q191 and K222. Residues Y297–G532 enclose the Glutamine amidotransferase type-1 domain. G352 lines the L-glutamine pocket. The Nucleophile; for glutamine hydrolysis role is filled by C379. L-glutamine is bound by residues Y380–Q383, E403, and R460. Catalysis depends on residues H505 and E507.

Belongs to the CTP synthase family. As to quaternary structure, homotetramer.

The enzyme catalyses UTP + L-glutamine + ATP + H2O = CTP + L-glutamate + ADP + phosphate + 2 H(+). It carries out the reaction L-glutamine + H2O = L-glutamate + NH4(+). The catalysed reaction is UTP + NH4(+) + ATP = CTP + ADP + phosphate + 2 H(+). The protein operates within pyrimidine metabolism; CTP biosynthesis via de novo pathway; CTP from UDP: step 2/2. Allosterically activated by GTP, when glutamine is the substrate; GTP has no effect on the reaction when ammonia is the substrate. The allosteric effector GTP functions by stabilizing the protein conformation that binds the tetrahedral intermediate(s) formed during glutamine hydrolysis. Inhibited by the product CTP, via allosteric rather than competitive inhibition. Catalyzes the ATP-dependent amination of UTP to CTP with either L-glutamine or ammonia as the source of nitrogen. Regulates intracellular CTP levels through interactions with the four ribonucleotide triphosphates. In Caldivirga maquilingensis (strain ATCC 700844 / DSM 13496 / JCM 10307 / IC-167), this protein is CTP synthase.